The chain runs to 363 residues: tRNA/tmRNA (uracil-C(5))-methyltransferase (363 aa).

S-adenosyl-L-methionine-binding residues include Gln187, Tyr215, Asn220, Glu236, and Asp296. Residue Cys321 is the Nucleophile of the active site. Glu355 (proton acceptor) is an active-site residue.

It belongs to the class I-like SAM-binding methyltransferase superfamily. RNA M5U methyltransferase family. TrmA subfamily.

It catalyses the reaction uridine(54) in tRNA + S-adenosyl-L-methionine = 5-methyluridine(54) in tRNA + S-adenosyl-L-homocysteine + H(+). The catalysed reaction is uridine(341) in tmRNA + S-adenosyl-L-methionine = 5-methyluridine(341) in tmRNA + S-adenosyl-L-homocysteine + H(+). Dual-specificity methyltransferase that catalyzes the formation of 5-methyluridine at position 54 (m5U54) in all tRNAs, and that of position 341 (m5U341) in tmRNA (transfer-mRNA). The polypeptide is tRNA/tmRNA (uracil-C(5))-methyltransferase (Pseudomonas paraeruginosa (strain DSM 24068 / PA7) (Pseudomonas aeruginosa (strain PA7))).